The primary structure comprises 676 residues: Potassium voltage-gated channel subfamily KQT member 1 (676 aa).

Disordered stretches follow at residues 1–28 and 62–84; these read MAAA…RGSA and APPA…PRPP. Residues 1-120 lie on the Cytoplasmic side of the membrane; it reads MAAASSPPRA…YNFLERPTGW (120 aa). A Phosphoserine; by PKA modification is found at serine 27. Over residues 62–73 the composition is skewed to pro residues; sequence APPASPAAPAAP. A helical membrane pass occupies residues 121–142; sequence KCFVYHFAVFLIVLVCLIFSVL. The Extracellular portion of the chain corresponds to 143–153; it reads STIEQYAALAT. The helical transmembrane segment at 154–176 threads the bilayer; the sequence is GTLFWMEIVLVVFFGTEYVVRLW. Residues 177–192 are Cytoplasmic-facing; sequence SAGCRSKYVGLWGRLR. A helical membrane pass occupies residues 193 to 218; sequence FARKPISIIDLIVVVASMVVLCVGSK. The Extracellular segment spans residues 219–226; that stretch reads GQVFATSA. Residues 227-242 form a helical; Voltage-sensor membrane-spanning segment; the sequence is IRGIRFLQILRMLHVD. The segment at 238–246 is interaction with KCNE3; it reads MLHVDRQGG. Residues 243–260 are Cytoplasmic-facing; that stretch reads RQGGTWRLLGSVVFIHRQ. Glutamine 244 is a binding site for a 1,2-diacyl-sn-glycero-3-phospho-(1D-myo-inositol-4,5-bisphosphate). The helical transmembrane segment at 261-283 threads the bilayer; it reads ELITTLYIGFLGLIFSSYFVYLA. Residues 284 to 299 are Extracellular-facing; it reads EKDAVNESGRVEFGSY. Asparagine 289 carries an N-linked (GlcNAc...) asparagine glycan. Positions 300-320 form an intramembrane region, pore-forming; that stretch reads ADALWWGVVTVTTIGYGDKVP. The Extracellular portion of the chain corresponds to 321–322; the sequence is QT. A helical membrane pass occupies residues 323-348; that stretch reads WVGKTIASCFSVFAISFFALPAGILG. Residues 349–676 lie on the Cytoplasmic side of the membrane; it reads SGFALKVQQK…VPRRGPDEGS (328 aa). The segment at 370–382 is interaction with CALM; it reads AAASLIQTAWRCY. A phosphoserine mark is found at serine 407 and serine 409. Positions 515-529 are interaction with CALM; calcium-dependent; it reads KVIRRMQYFVAKKKF. Residues 535–572 form an interaction with KCNE1 C-terminus region; sequence PYDVRDVIEQYSQGHLNLMVRIKELQRRLDQSIGKPSL. The stretch at 585–621 forms a coiled coil; that stretch reads SNTIGARLNRVEDKVTQLDQRLALITDMLHQLLSLHG. The tract at residues 588-616 is interaction with AKAP9; the sequence is IGARLNRVEDKVTQLDQRLALITDMLHQL. The tract at residues 589 to 620 is C-terminal assembly domain (tetramerization); the sequence is GARLNRVEDKVTQLDQRLALITDMLHQLLSLH. The disordered stretch occupies residues 620-676; the sequence is HGGSTPGSGGPPREGGAHITQPCGSGGSVDPELFLPSNTLPTYEQLTVPRRGPDEGS. Gly residues predominate over residues 623–632; that stretch reads STPGSGGPPR. Polar residues predominate over residues 655–664; sequence PSNTLPTYEQ.

This sequence belongs to the potassium channel family. KQT (TC 1.A.1.15) subfamily. Kv7.1/KCNQ1 sub-subfamily. Tetramer. Heterotetramer with KCNE1; targets to the membrane raft. Interacts (via C-terminus) with calmodulin; forms a heterooctameric structure (with 4:4 KCNQ1:CALM stoichiometry); the interaction is calcium-independent, constitutive, participates in the proper assembly of a functional channel and also acts a calcium sensor. KCNQ1 channels interact more strongly with Ca(2+)-CALM than with apoCALM. Interacts with AKAP9; targets protein kinase A (PKA) catalytic and regulatory subunits and protein phosphatase 1 (PP1) to the KCNQ1-KCNE1 complex, allowing PKA-mediated phosphorylation and increase of delayed rectifier potassium channel activity. Interacts with KCNE2; forms a heterooligomer complex that targets to the membrane raft and leading to currents with an apparently instantaneous activation, a rapid deactivation process and a linear current-voltage relationship and decreases the amplitude of the outward current. Interacts with AP2M1; mediates estrogen-induced internalization via clathrin-coated vesicles. Interacts with NEDD4L; promotes internalization and decreases I(Ks) currents. Interacts with USP2; counteracts the NEDD4L-specific down-regulation of I(Ks) and restore plasma membrane localization. Heterotetramer with KCNQ5; has a voltage-gated potassium channel activity. Interacts with KCNE3; four KCNE3 molecules are bound to one KCNQ1 tetramer (4:4 KCNQ1:KCNE3 stoichiometry); alters membrane raft localization; affects KCNQ1 structure and gating properties. Interacts with KCNE4; impairs KCNQ1 localization in lipid rafts and inhibits voltage-gated potassium channel activity. Interacts with KCNE5; impairs KCNQ1 localization in lipid rafts and only conducts current upon strong and continued depolarization. Interacts with SLC5A3; forms coregulatory channel-transporter complexes that modulate Na(+)-coupled myo-inositol influx through the transporter. Post-translationally, phosphorylation at Ser-27 by PKA; increases delayed rectifier potassium channel activity of the KCNQ1-KCNE1 complex through a macromolecular complex that includes PKA, PP1, and the targeting protein AKAP9. In terms of processing, ubiquitinated by NEDD4L; promotes internalization. The ubiquitinylated form is internalized through a clathrin-mediated endocytosis by interacting with AP2M1 and is recycled back to the cell membrane via RAB4A and RAB11A. Deubiquitinated by USP2; counteracts the NEDD4L-specific down-regulation of I(Ks) and restores the membrane localization. As to expression, abundantly expressed in heart, pancreas, prostate, kidney, small intestine and peripheral blood leukocytes. Less abundant in placenta, lung, spleen, colon, thymus, testis and ovaries.

The protein resides in the cell membrane. It is found in the cytoplasmic vesicle membrane. It localises to the early endosome. The protein localises to the membrane raft. Its subcellular location is the endoplasmic reticulum. The protein resides in the basolateral cell membrane. It is found in the apical cell membrane. The catalysed reaction is K(+)(in) = K(+)(out). With respect to regulation, PIP2 molecule is essential to activate KCNQ channels by inducing the coupling of the voltage-sensing domain (VSD) and the pore-forming domain (PD). Upon channel activation, PIP2 disrupts the VSD-calmodulin/CALM interactions, causing the release of CALM from the VSD which triggers the opening of the gate. Calcium potentiates KCNQ1 channel current through calcium-bound CALM. Calcium-bound CALM competes with PIP2 to stabilize the channel open state. Its function is as follows. Pore-forming subunit of the voltage-gated potassium (Kv) channel involved in the regulation of cardiomyocyte excitability and important in normal development and functions of myocardium, inner ear, stomach and colon. Associates with KCNE beta subunits that modulates current kinetics. Induces a voltage-dependent current by rapidly activating and slowly deactivating potassium-selective outward current. Also promotes a delayed voltage activated potassium current showing outward rectification characteristic. During beta-adrenergic receptor stimulation, participates in cardiac repolarization by associating with KCNE1 to form the I(Ks) cardiac potassium current that increases the amplitude and slows down the activation kinetics of outward potassium current I(Ks). Muscarinic agonist oxotremorine-M strongly suppresses KCNQ1/KCNE1 current. When associated with KCNE3, forms the potassium channel that is important for cyclic AMP-stimulated intestinal secretion of chloride ions. This interaction with KCNE3 is reduced by 17beta-estradiol, resulting in the reduction of currents. During conditions of increased substrate load, maintains the driving force for proximal tubular and intestinal sodium ions absorption, gastric acid secretion, and cAMP-induced jejunal chloride ions secretion. Allows the provision of potassium ions to the luminal membrane of the secretory canaliculus in the resting state as well as during stimulated acid secretion. When associated with KCNE2, forms a heterooligomer complex leading to currents with an apparently instantaneous activation, a rapid deactivation process and a linear current-voltage relationship and decreases the amplitude of the outward current. When associated with KCNE4, inhibits voltage-gated potassium channel activity. When associated with KCNE5, this complex only conducts current upon strong and continued depolarization. Also forms a heterotetramer with KCNQ5; has a voltage-gated potassium channel activity. Binds with phosphatidylinositol 4,5-bisphosphate. KCNQ1-KCNE2 channel associates with Na(+)-coupled myo-inositol symporter in the apical membrane of choroid plexus epithelium and regulates the myo-inositol gradient between blood and cerebrospinal fluid with an impact on neuron excitability. Non-functional alone but modulatory when coexpressed with the full-length isoform 1. The polypeptide is Potassium voltage-gated channel subfamily KQT member 1 (Homo sapiens (Human)).